The following is an 81-amino-acid chain: Putative defensin-like protein 188 (81 aa).

Positions 1–19 (MKNSSLLFILIVVFVISSS) are cleaved as a signal peptide. 4 cysteine pairs are disulfide-bonded: Cys31–Cys81, Cys37–Cys57, Cys43–Cys75, and Cys47–Cys77.

This sequence belongs to the DEFL family.

The protein resides in the secreted. In Arabidopsis thaliana (Mouse-ear cress), this protein is Putative defensin-like protein 188 (LCR41).